Consider the following 328-residue polypeptide: Malate dehydrogenase (328 aa).

11 to 17 (GAAGQIG) serves as a coordination point for NAD(+). Substrate is bound by residues Arg94 and Arg100. Residues Asn107, Gln114, and 131-133 (VGN) each bind NAD(+). Residues Asn133 and Arg164 each coordinate substrate. His189 functions as the Proton acceptor in the catalytic mechanism.

The protein belongs to the LDH/MDH superfamily. MDH type 2 family.

It carries out the reaction (S)-malate + NAD(+) = oxaloacetate + NADH + H(+). Catalyzes the reversible oxidation of malate to oxaloacetate. The chain is Malate dehydrogenase from Acinetobacter baylyi (strain ATCC 33305 / BD413 / ADP1).